The chain runs to 195 residues: Interferon tau-2 (195 aa).

The first 23 residues, 1–23 (MAFVLSLLMALVLVSYGPGGSLG), serve as a signal peptide directing secretion. 2 disulfide bridges follow: Cys-24–Cys-122 and Cys-52–Cys-162.

Belongs to the alpha/beta interferon family. IFN-alphaII subfamily. Constitutively and exclusively expressed in the mononuclear cells of the extraembryonic trophectoderm.

It is found in the secreted. Its function is as follows. Paracrine hormone primarily responsible for maternal recognition of pregnancy. Interacts with endometrial receptors, probably type I interferon receptors, and blocks estrogen receptor expression, preventing the estrogen-induced increase in oxytocin receptor expression in the endometrium. This results in the suppression of the pulsatile endometrial release of the luteolytic hormone prostaglandin F2-alpha, hindering the regression of the corpus luteum (luteolysis) and therefore a return to ovarian cyclicity. This, and a possible direct effect of IFN-tau on prostaglandin synthesis, leads in turn to continued ovarian progesterone secretion, which stimulates the secretion by the endometrium of the nutrients required for the growth of the conceptus. In summary, displays particularly high antiviral and antiproliferative potency concurrently with particular weak cytotoxicity, high antiluteolytic activity and immunomodulatory properties. In contrast with other IFNs, IFN-tau is not virally inducible. This chain is Interferon tau-2 (IFNT2), found in Ovis aries (Sheep).